We begin with the raw amino-acid sequence, 432 residues long: Serine--tRNA ligase (432 aa).

Residue 236–238 (TSE) coordinates L-serine. 267–269 (RSE) serves as a coordination point for ATP. E290 provides a ligand contact to L-serine. 354–357 (EISS) contributes to the ATP binding site. S390 is an L-serine binding site.

This sequence belongs to the class-II aminoacyl-tRNA synthetase family. Type-1 seryl-tRNA synthetase subfamily. In terms of assembly, homodimer. The tRNA molecule binds across the dimer.

The protein resides in the cytoplasm. It catalyses the reaction tRNA(Ser) + L-serine + ATP = L-seryl-tRNA(Ser) + AMP + diphosphate + H(+). It carries out the reaction tRNA(Sec) + L-serine + ATP = L-seryl-tRNA(Sec) + AMP + diphosphate + H(+). It functions in the pathway aminoacyl-tRNA biosynthesis; selenocysteinyl-tRNA(Sec) biosynthesis; L-seryl-tRNA(Sec) from L-serine and tRNA(Sec): step 1/1. In terms of biological role, catalyzes the attachment of serine to tRNA(Ser). Is also able to aminoacylate tRNA(Sec) with serine, to form the misacylated tRNA L-seryl-tRNA(Sec), which will be further converted into selenocysteinyl-tRNA(Sec). This is Serine--tRNA ligase from Pseudoalteromonas atlantica (strain T6c / ATCC BAA-1087).